Consider the following 206-residue polypeptide: LexA repressor (206 aa).

The H-T-H motif DNA-binding region spans 28-48 (RAEIAKRLGFKSANAAEEHLK). Residues S123 and K160 each act as for autocatalytic cleavage activity in the active site.

The protein belongs to the peptidase S24 family. In terms of assembly, homodimer.

The catalysed reaction is Hydrolysis of Ala-|-Gly bond in repressor LexA.. Functionally, represses a number of genes involved in the response to DNA damage (SOS response), including recA and lexA. In the presence of single-stranded DNA, RecA interacts with LexA causing an autocatalytic cleavage which disrupts the DNA-binding part of LexA, leading to derepression of the SOS regulon and eventually DNA repair. The polypeptide is LexA repressor (Shewanella sediminis (strain HAW-EB3)).